A 524-amino-acid chain; its full sequence is MIGEQYTSIITGFKSALAVSCIAVSLFLLSPWIAYARLPSSIKSPIKAKGPLSALRACLNEISAGAKTSTRGYELYSKKGQSFAMLNINFRPQVILPPEHVRWLVTQPEDILSHAKASDDADALGYIWPLFDASALHSFSKVLQIDLTRNVTQTEKDVLEEVQHIMDELVGQTESWKEVNMVQAFERIMYQATQRVYVGLPLCRDSTYMGYVKGYARSLGTAMVFAAQLTPWPLRQVTALLAGLPVYYYVLRVRSYLSPLFKERMERLKEKGGTQDDNLEGEPRNLITWMSDGVLSGVGPKSISPSEMVTWLGILALLPTDNLWTTCTNVLLDLLSSESEHAYLHTIREEARTVFASSKESGKPVSHGLHHIDSAIRESLRMNSLSPRSLHRQVVRRGGVVLPDGQKVPTGTWLCVLSGNIQRDEDYYEDAQTYKPFRFVPKLTEAGGDKAPLLPLTNEKYLTFGYGRHACPGRWFSFQVMKIVIAYILANYDIQPLEKRPDNIVFADLNIPHLSHIIRIKRMT.

Residues 16–36 (ALAVSCIAVSLFLLSPWIAYA) form a helical membrane-spanning segment. The N-linked (GlcNAc...) asparagine glycan is linked to N150. C471 is a binding site for heme.

The protein belongs to the cytochrome P450 family. It depends on heme as a cofactor.

Its subcellular location is the membrane. It participates in secondary metabolite biosynthesis. Functionally, cytochrome P450 monooxygenase; part of the lna gene cluster that mediates the biosynthesis of diastereomeric piperazines. Lna and lnb clusters encode sets of enzymes that produce overlapping sets of previously undescribed metabolites such as piperazinomycin-like metabolites or morpholine. The lna and lnb biosynthetic pathways appear to be part of a signaling network that controls the formation of sclerotia, a resilient overwintering structure. One primary function of the non-canonical nonribosomal peptide synthetases lnaA and lnbA consists in the reduction of L-tyrosine. The presence in the clusters of tailoring enzymes such as the oxidoreductases lnaB, lnbB, lnaE or lnbE, as well as of the cytochrome P450 monooxygenases lnaC, lnaD, or lnbC, might explain formation of various diastereomeric piperazines. The sequence is that of Cytochrome P450 monooxygenase lnaC from Aspergillus flavus (strain ATCC 200026 / FGSC A1120 / IAM 13836 / NRRL 3357 / JCM 12722 / SRRC 167).